A 101-amino-acid polypeptide reads, in one-letter code: Integration host factor subunit alpha (101 aa).

The protein belongs to the bacterial histone-like protein family. As to quaternary structure, heterodimer of an alpha and a beta chain.

Functionally, this protein is one of the two subunits of integration host factor, a specific DNA-binding protein that functions in genetic recombination as well as in transcriptional and translational control. The polypeptide is Integration host factor subunit alpha (Saccharophagus degradans (strain 2-40 / ATCC 43961 / DSM 17024)).